A 400-amino-acid polypeptide reads, in one-letter code: NADH-quinone oxidoreductase subunit D (400 aa).

The protein belongs to the complex I 49 kDa subunit family. In terms of assembly, NDH-1 is composed of 14 different subunits. Subunits NuoB, C, D, E, F, and G constitute the peripheral sector of the complex.

Its subcellular location is the cell inner membrane. The enzyme catalyses a quinone + NADH + 5 H(+)(in) = a quinol + NAD(+) + 4 H(+)(out). In terms of biological role, NDH-1 shuttles electrons from NADH, via FMN and iron-sulfur (Fe-S) centers, to quinones in the respiratory chain. The immediate electron acceptor for the enzyme in this species is believed to be menaquinone. Couples the redox reaction to proton translocation (for every two electrons transferred, four hydrogen ions are translocated across the cytoplasmic membrane), and thus conserves the redox energy in a proton gradient. This Prosthecochloris aestuarii (strain DSM 271 / SK 413) protein is NADH-quinone oxidoreductase subunit D.